A 1028-amino-acid polypeptide reads, in one-letter code: MDLNGETSTKRKRSSVAAPAERPAKHLKPESSTLTPGDATPANGTVYDVEDEEDTGRVMPIGPAQADSPEWQATIEKVVKSVVSIHFCQTCSFDTDLSMSSQATGFVVDAERGYILTNRHVVCAGPFWGYCIFDNHEECDVRPVYRDPVHDFGILKFDPKAIRYMELTELKLRPEAARVGCEIRVVGNDAGEKLSILSGVISRLDRNAPEYGDGYCDFNTNYIQAAAAASGGSSGSPVVNIDGHAIALQAGGRADGAATDYFLPLDRPLRALECIRRGEPVARGTIQTQWILKPFDECRRLGLTPEWEAAVRKASPHETSMLVAEIILPEGPADGKLEEGDVLLQVNGELLTQFIRLDDILDSSVGKTVRLLVQRGGQNVEVECEVGDLHAITPDRFVTVAGGTFHNLSYQQARLYAIAARGVYVCEAAGSFKLENTLSGWIIDAVDKRPTRNLDEFTEVMKTIPDRARVVISYRHIRDLHTRGTSIVYIDRHWHPKMRMAIRNDETGLWDFSDLADPVPAETPVPRKADFIQLDGVSQPAVADIVRSFVRVSCTMPLKLDGYPQAKKTGFGLVIDAEKGLVVVSRAIVPYNLCDINITVADSIIVAAKVIFLHPLQNYTIIQYDPSLVQAPVQSAKLSTEYIKQGQETIFVGFNQNFRIVVAKTAVTDITTVSIPANASAPRYRAINLDAITVDTGLSGQCTNGVLIGEDGVVQALWLNYLGERTPSSHKDVEYHLGFATPALLPVTSKIQQGIIPKLRILNMESYVVQMSQARIMGVSEEWIQKVAQANPSRHQLFMVRKVDCPPPQFTDNADSLQEGDIILTLDGQLITRVSELDKMYEKEVLDALIVRNGQEMHLKLPTVPTEDLETDRAVVFCGAVLQKPHHAVRQQISKLHSEVYVSARSRGSPAYQYGLAPTNFITAVNGVPTPNLDSFVREVSKIPDNTYFRLRAVTFDNVPWVVTMKKNDHYFPMSEYVKDPSQPLGWRTVSHDRDRHKDGITPDAANLNPDAMDEVYEEVSDVEPEVD.

Residues 1–46 form a disordered region; the sequence is MDLNGETSTKRKRSSVAAPAERPAKHLKPESSTLTPGDATPANGTV. The tract at residues 82–266 is serine protease; it reads VVSIHFCQTC…AATDYFLPLD (185 aa). Active-site charge relay system residues include histidine 120, aspartate 151, and serine 233. PDZ domains follow at residues 305-377 and 876-957; these read PEWE…QRGG and VFCG…VTFD. The tract at residues 989-1028 is disordered; that stretch reads TVSHDRDRHKDGITPDAANLNPDAMDEVYEEVSDVEPEVD. A compositionally biased stretch (basic and acidic residues) spans 990 to 1001; it reads VSHDRDRHKDGI. Positions 1012-1028 are enriched in acidic residues; the sequence is AMDEVYEEVSDVEPEVD.

The protein belongs to the peptidase S1C family.

The protein localises to the nucleus. Functionally, nuclear serine protease which mediates apoptosis. The protein is Pro-apoptotic serine protease nma111 (nma111) of Neosartorya fischeri (strain ATCC 1020 / DSM 3700 / CBS 544.65 / FGSC A1164 / JCM 1740 / NRRL 181 / WB 181) (Aspergillus fischerianus).